The primary structure comprises 83 residues: Putative defensin-like protein 111 (83 aa).

Residues 1 to 24 (MAITKKILLPFVLTILFVISSVHC) form the signal peptide. Cystine bridges form between C40–C80, C46–C69, C54–C78, and C58–C79.

It belongs to the DEFL family.

It is found in the secreted. The protein is Putative defensin-like protein 111 (LCR50) of Arabidopsis thaliana (Mouse-ear cress).